The sequence spans 497 residues: Probable malate:quinone oxidoreductase (497 aa).

This sequence belongs to the MQO family. Requires FAD as cofactor.

The catalysed reaction is (S)-malate + a quinone = a quinol + oxaloacetate. It participates in carbohydrate metabolism; tricarboxylic acid cycle; oxaloacetate from (S)-malate (quinone route): step 1/1. This is Probable malate:quinone oxidoreductase from Tolumonas auensis (strain DSM 9187 / NBRC 110442 / TA 4).